The sequence spans 61 residues: Large ribosomal subunit protein bL28 (61 aa).

A disordered region spans residues 1–26 (MAKDYVTGKRTHFGNTRSHALNHSRR).

It belongs to the bacterial ribosomal protein bL28 family.

This is Large ribosomal subunit protein bL28 from Lactiplantibacillus plantarum (strain ATCC BAA-793 / NCIMB 8826 / WCFS1) (Lactobacillus plantarum).